We begin with the raw amino-acid sequence, 86 residues long: Insulin (86 aa).

3 disulfide bridges follow: Cys-7/Cys-72, Cys-19/Cys-85, and Cys-71/Cys-76. A propeptide spans 33-63 (ELEDPQVGQADPGVVPEAGRLQPLALEMTLQ) (c peptide).

The protein belongs to the insulin family. In terms of assembly, heterodimer of a B chain and an A chain linked by two disulfide bonds.

The protein resides in the secreted. Its function is as follows. Insulin decreases blood glucose concentration. It increases cell permeability to monosaccharides, amino acids and fatty acids. It accelerates glycolysis, the pentose phosphate cycle, and glycogen synthesis in liver. This chain is Insulin (INS), found in Chinchilla chinchilla (Short-tailed chinchilla).